Reading from the N-terminus, the 1405-residue chain is Protein translocase subunit SecA (1405 aa).

The segment at 1–1099 (MHMKIKKFKK…SDYKKLNEDE (1099 aa)) is protein translocase subunit SecA. Residues Q88, 106–110 (GEGKS), and D494 contribute to the ATP site. The segment at 1100–1405 (SDDDIKAFYK…LDYLKENNKK (306 aa)) is unknown.

This sequence belongs to the SecA family. In terms of assembly, monomer and homodimer. Part of the essential Sec protein translocation apparatus which comprises SecA, SecYEG and auxiliary proteins SecDF. Other proteins may also be involved.

It localises to the cell membrane. The protein localises to the cytoplasm. The catalysed reaction is ATP + H2O + cellular proteinSide 1 = ADP + phosphate + cellular proteinSide 2.. Functionally, part of the Sec protein translocase complex. Interacts with the SecYEG preprotein conducting channel. Has a central role in coupling the hydrolysis of ATP to the transfer of proteins into and across the cell membrane, serving as an ATP-driven molecular motor driving the stepwise translocation of polypeptide chains across the membrane. The protein is Protein translocase subunit SecA of Malacoplasma penetrans (strain HF-2) (Mycoplasma penetrans).